Reading from the N-terminus, the 351-residue chain is L-threonine 3-dehydrogenase (351 aa).

Residue C39 participates in Zn(2+) binding. Active-site charge relay system residues include T41 and H44. Zn(2+) contacts are provided by H64, E65, C94, C97, C100, and C108. Residues I176, D196, R201, 271 to 273 (LGI), and 295 to 296 (IY) each bind NAD(+).

This sequence belongs to the zinc-containing alcohol dehydrogenase family. In terms of assembly, homotetramer. It depends on Zn(2+) as a cofactor.

It localises to the cytoplasm. The enzyme catalyses L-threonine + NAD(+) = (2S)-2-amino-3-oxobutanoate + NADH + H(+). It participates in amino-acid degradation; L-threonine degradation via oxydo-reductase pathway; glycine from L-threonine: step 1/2. Functionally, catalyzes the NAD(+)-dependent oxidation of L-threonine to 2-amino-3-ketobutyrate. This Francisella tularensis subsp. novicida (strain U112) protein is L-threonine 3-dehydrogenase.